Here is a 607-residue protein sequence, read N- to C-terminus: Actin-related protein 5 (607 aa).

A Glycyl lysine isopeptide (Lys-Gly) (interchain with G-Cter in SUMO2) cross-link involves residue Lys-283. Coiled-coil stretches lie at residues Thr-288–Leu-327 and Glu-355–Val-384. Over residues Ser-584–Ser-596 the composition is skewed to low complexity. The disordered stretch occupies residues Ser-584–Ala-607. Gly residues predominate over residues Ala-597–Ala-607.

The protein belongs to the actin family. ARP5 subfamily. In terms of assembly, component of the chromatin remodeling INO80 complex; specifically part of a complex module associated with the helicase ATP-binding and the helicase C-terminal domain of INO80. Interacts with DDB1. Interacts with ACTR8; the interaction is observed in asynchronous (interphase) cells but not in metaphase-arrested cells indicative for a possible dissociation of the INO80 complex in mitotic cells.

The protein resides in the nucleus. It localises to the cytoplasm. Functionally, proposed core component of the chromatin remodeling INO80 complex which is involved in transcriptional regulation, DNA replication and probably DNA repair. Involved in DNA double-strand break repair and UV-damage excision repair. This Homo sapiens (Human) protein is Actin-related protein 5 (ACTR5).